Here is a 539-residue protein sequence, read N- to C-terminus: MSELEQIRLANIERNKALLAALNLPTEAKKESVDPEVAPKKSRKRNSARLESPDDGSDDSAPRTRRKSRRLQGLDPEANALKQEDLGGSGELKRLMQQLNGGVKKERLSGDLSLKEMLTKTGLDEKEWSASLGQLFGDGSRVSQGDFFDEIVKKEEEDTKDIDIKQSRDNLSGLQLGKMSKVTKERIYITAVHPGTDKRIVLAGDKIGVLGIWDVDSDNEPLQLQLHHATIPALCFDQNSNDILYSASYDGSVRSLELKTGKSGDVLDLEAKKNASVGVSDVANPQPHLLYASTLCGHLIRKDLRTKSTEYETLILGEKKIGGFSVDPINTHLLATGSLDRSMRIWDLRATETARTIPGGEVIDTQFQMPHLQAIYNSRLSVSSTDWNLAGQIVCNGYDDTINIFNQSDYFLDMLNDGNGTEPVKKTRRTRNSKLAEPEISDQELPEIKKPSVRIKHNCQTGRWVTILKARWQQQPLDGVQKFAIANMNRYIDIYSGTGHQLAHLGDALMTAVPSALAFHPTQNWIAGGNSSGKMYWWE.

Residues 22 to 89 (LNLPTEAKKE…ALKQEDLGGS (68 aa)) are disordered. Over residues 27 to 39 (EAKKESVDPEVAP) the composition is skewed to basic and acidic residues. 6 WD repeats span residues 182 to 223 (VTKE…EPLQ), 226 to 268 (LHHA…DVLD), 316 to 356 (LGEK…TART), 377 to 415 (NSRL…LDML), 462 to 505 (GRWV…LAHL), and 508 to 539 (ALMT…YWWE).

It belongs to the WD repeat DDB2/WDR76 family.

Functionally, DNA-binding protein that binds to both single- and double-stranded DNA. Binds preferentially to UV-damaged DNA. May be involved in DNA-metabolic processes. In Yarrowia lipolytica (strain CLIB 122 / E 150) (Yeast), this protein is DNA damage-binding protein CMR1.